The sequence spans 464 residues: MEPSPLELPVDAVRRIATELNCDPTDERVALRLDEEDKLKRFKDCFYIPKMRDLPSIDLSLVNEDDNAIYFLGNSLGLQPKMVKTYLEEELDKWAKIGAYGHEVGKRPWIIGDESIVSLMKDIVGAHEKEIALMNALTVNLHLLLLSFFKPTPKRHKILLEAKAFPSDHYAIESQIQLHGLDVEKSMRMIKPREGEETLRMEDILEVIEKEGDSIAVVLFSGLHFYTGQLFNIPAITQAGHAKGCFVGFDLAHAVGNVELHLHDWDVDFACWCSYKYLNSGAGGLAGAFIHEKHAHTIKPALVGWFGHELSTRFNMDNKLQLIPGVNGFRISNPPILLVCSLHASLEIFQQATMTALRRKSILLTGYLEYLLKHYHGGNDTENKRPVVNIITPSRAEERGCQLTLTFSISKKGVFKELEKRGVVCDKREPEGIRVAPVPLYNSFHDVYKFIRLLTAILDSTERN.

Methionine 1 bears the N-acetylmethionine mark. Pyridoxal 5'-phosphate-binding positions include leucine 137, threonine 138, 165–168, serine 221, aspartate 250, histidine 253, and tyrosine 275; that span reads FPSD. An N6-(pyridoxal phosphate)lysine modification is found at lysine 276. Residues tryptophan 305 and asparagine 333 each coordinate pyridoxal 5'-phosphate.

This sequence belongs to the kynureninase family. In terms of assembly, homodimer. The cofactor is pyridoxal 5'-phosphate. In terms of tissue distribution, high levels in liver and kidney. Also detected in heart, retina, ovary. Lung, testis and brain.

The protein resides in the cytoplasm. Its subcellular location is the cytosol. It carries out the reaction L-kynurenine + H2O = anthranilate + L-alanine + H(+). The catalysed reaction is 3-hydroxy-L-kynurenine + H2O = 3-hydroxyanthranilate + L-alanine + H(+). The protein operates within amino-acid degradation; L-kynurenine degradation; L-alanine and anthranilate from L-kynurenine: step 1/1. It participates in cofactor biosynthesis; NAD(+) biosynthesis; quinolinate from L-kynurenine: step 2/3. Its activity is regulated as follows. Inhibited by o-methylbenzoylalanine (OMBA). In terms of biological role, catalyzes the cleavage of L-kynurenine (L-Kyn) and L-3-hydroxykynurenine (L-3OHKyn) into anthranilic acid (AA) and 3-hydroxyanthranilic acid (3-OHAA), respectively. Has a preference for the L-3-hydroxy form. Also has cysteine-conjugate-beta-lyase activity. The chain is Kynureninase (Kynu) from Rattus norvegicus (Rat).